The primary structure comprises 91 residues: Small ribosomal subunit protein uS19 (91 aa).

It belongs to the universal ribosomal protein uS19 family.

Its function is as follows. Protein S19 forms a complex with S13 that binds strongly to the 16S ribosomal RNA. The sequence is that of Small ribosomal subunit protein uS19 from Prochlorococcus marinus (strain MIT 9515).